We begin with the raw amino-acid sequence, 922 residues long: DNA gyrase subunit A (922 aa).

The 501-residue stretch at 34–534 (LPDVRDGLKP…SSAEINIEDL (501 aa)) folds into the Topo IIA-type catalytic domain. Tyr-122 acts as the O-(5'-phospho-DNA)-tyrosine intermediate in catalysis. Positions 561 to 567 (QRRGGRG) match the GyrA-box motif. 2 disordered regions span residues 715-763 (MQPM…VRPM) and 899-922 (IDGE…DPEE). The span at 723–743 (DDVDGDDESVIDAGNDDDGSD) shows a compositional bias: acidic residues.

The protein belongs to the type II topoisomerase GyrA/ParC subunit family. As to quaternary structure, heterotetramer, composed of two GyrA and two GyrB chains. In the heterotetramer, GyrA contains the active site tyrosine that forms a transient covalent intermediate with DNA, while GyrB binds cofactors and catalyzes ATP hydrolysis.

It is found in the cytoplasm. It carries out the reaction ATP-dependent breakage, passage and rejoining of double-stranded DNA.. Functionally, a type II topoisomerase that negatively supercoils closed circular double-stranded (ds) DNA in an ATP-dependent manner to modulate DNA topology and maintain chromosomes in an underwound state. Negative supercoiling favors strand separation, and DNA replication, transcription, recombination and repair, all of which involve strand separation. Also able to catalyze the interconversion of other topological isomers of dsDNA rings, including catenanes and knotted rings. Type II topoisomerases break and join 2 DNA strands simultaneously in an ATP-dependent manner. The protein is DNA gyrase subunit A of Aeromonas salmonicida.